Reading from the N-terminus, the 636-residue chain is Chaperone protein HtpG (636 aa).

The interval methionine 1–arginine 345 is a; substrate-binding. Residues glutamate 346 to arginine 562 are b. A c region spans residues leucine 563–lysine 636.

Belongs to the heat shock protein 90 family. In terms of assembly, homodimer.

The protein resides in the cytoplasm. Functionally, molecular chaperone. Has ATPase activity. This is Chaperone protein HtpG from Dechloromonas aromatica (strain RCB).